The primary structure comprises 412 residues: Inositol polyphosphate-5-phosphatase A (412 aa).

Cys409 is lipidated: S-farnesyl cysteine. Positions 410–412 (VVQ) are cleaved as a propeptide — removed in mature form.

It belongs to the inositol 1,4,5-trisphosphate 5-phosphatase type I family. In terms of assembly, interacts with TASOR. Isoprenylation at Cys-409 is required for localization at the membrane.

The protein resides in the cell membrane. The protein localises to the cell projection. It is found in the dendrite. The catalysed reaction is 1D-myo-inositol 1,4,5-trisphosphate + H2O = 1D-myo-inositol 1,4-bisphosphate + phosphate. It carries out the reaction 1D-myo-inositol 1,3,4,5-tetrakisphosphate + H2O = 1D-myo-inositol 1,3,4-trisphosphate + phosphate. Its activity is regulated as follows. Inhibited by EDTA and 2,3-bisphosphoglycerate. In terms of biological role, phosphatase that specifically hydrolyzes the 5-phosphate of inositol 1,4,5-trisphosphate to inositol 1,4-bisphosphate, and inositol 1,3,4,5-tetrasphosphate to inositol 1,3,4-trisphosphate. Plays a crucial role in the survival of cerebellar Purkinje cells. The chain is Inositol polyphosphate-5-phosphatase A (INPP5A) from Canis lupus familiaris (Dog).